Reading from the N-terminus, the 806-residue chain is Mitochondrial intermediate peptidase (806 aa).

The N-terminal 29 residues, 1–29, are a transit peptide targeting the mitochondrion; that stretch reads MLSRHLTVLRSACRVSHDLRVPSTQAVRK. H581 is a Zn(2+) binding site. The active site involves E582. Zn(2+)-binding residues include H585 and H588.

The protein belongs to the peptidase M3 family. Zn(2+) serves as cofactor.

The protein localises to the mitochondrion matrix. It carries out the reaction Release of an N-terminal octapeptide as second stage of processing of some proteins imported into the mitochondrion.. Functionally, cleaves proteins, imported into the mitochondrion, to their mature size. While most mitochondrial precursor proteins are processed to the mature form in one step by mitochondrial processing peptidase (MPP), the sequential cleavage by MIP of an octapeptide after initial processing by MPP is a required step for a subgroup of nuclear-encoded precursor proteins destined for the matrix or the inner membrane. The polypeptide is Mitochondrial intermediate peptidase (OCT1) (Malassezia globosa (strain ATCC MYA-4612 / CBS 7966) (Dandruff-associated fungus)).